A 511-amino-acid chain; its full sequence is Bifunctional purine biosynthesis protein PurH (511 aa).

One can recognise an MGS-like domain in the interval 1–145 (MKKRALVSVS…KNHKFVSVIV (145 aa)).

Belongs to the PurH family.

The catalysed reaction is (6R)-10-formyltetrahydrofolate + 5-amino-1-(5-phospho-beta-D-ribosyl)imidazole-4-carboxamide = 5-formamido-1-(5-phospho-D-ribosyl)imidazole-4-carboxamide + (6S)-5,6,7,8-tetrahydrofolate. It carries out the reaction IMP + H2O = 5-formamido-1-(5-phospho-D-ribosyl)imidazole-4-carboxamide. Its pathway is purine metabolism; IMP biosynthesis via de novo pathway; 5-formamido-1-(5-phospho-D-ribosyl)imidazole-4-carboxamide from 5-amino-1-(5-phospho-D-ribosyl)imidazole-4-carboxamide (10-formyl THF route): step 1/1. It participates in purine metabolism; IMP biosynthesis via de novo pathway; IMP from 5-formamido-1-(5-phospho-D-ribosyl)imidazole-4-carboxamide: step 1/1. This is Bifunctional purine biosynthesis protein PurH from Bacillus thuringiensis subsp. konkukian (strain 97-27).